Consider the following 481-residue polypeptide: tRNA-2-methylthio-N(6)-dimethylallyladenosine synthase (481 aa).

The MTTase N-terminal domain maps to 24 to 140 (KKLFIESYGC…LPNLLAEVEE (117 aa)). [4Fe-4S] cluster-binding residues include Cys33, Cys69, Cys103, Cys178, Cys182, and Cys185. One can recognise a Radical SAM core domain in the interval 164–411 (MSNGITALVS…DLQQKHAWFR (248 aa)). The TRAM domain occupies 413–476 (EEFVGKTVEV…SGTLKGEAVG (64 aa)).

The protein belongs to the methylthiotransferase family. MiaB subfamily. Monomer. It depends on [4Fe-4S] cluster as a cofactor.

Its subcellular location is the cytoplasm. It catalyses the reaction N(6)-dimethylallyladenosine(37) in tRNA + (sulfur carrier)-SH + AH2 + 2 S-adenosyl-L-methionine = 2-methylsulfanyl-N(6)-dimethylallyladenosine(37) in tRNA + (sulfur carrier)-H + 5'-deoxyadenosine + L-methionine + A + S-adenosyl-L-homocysteine + 2 H(+). Catalyzes the methylthiolation of N6-(dimethylallyl)adenosine (i(6)A), leading to the formation of 2-methylthio-N6-(dimethylallyl)adenosine (ms(2)i(6)A) at position 37 in tRNAs that read codons beginning with uridine. This chain is tRNA-2-methylthio-N(6)-dimethylallyladenosine synthase, found in Flavobacterium johnsoniae (strain ATCC 17061 / DSM 2064 / JCM 8514 / BCRC 14874 / CCUG 350202 / NBRC 14942 / NCIMB 11054 / UW101) (Cytophaga johnsonae).